The sequence spans 253 residues: Small ribosomal subunit protein uS5 (253 aa).

Residues 1-30 (MAESAPRGFGRGGRGGRGRGRGRRGAKRDE) are disordered. Positions 14 to 26 (RGGRGRGRGRRGA) are enriched in basic residues. The S5 DRBM domain occupies 75 to 138 (LNDEVMKVVP…IMGKLSIMPI (64 aa)).

It belongs to the universal ribosomal protein uS5 family. As to quaternary structure, component of the small ribosomal subunit (SSU). Mature yeast ribosomes consist of a small (40S) and a large (60S) subunit. The 40S small subunit contains 1 molecule of ribosomal RNA (18S rRNA) and at least 33 different proteins. The large 60S subunit contains 3 rRNA molecules (25S, 5.8S and 5S rRNA) and at least 46 different proteins. Interacts with snoRNA U3. Interacts with MPP10. Component of the ribosomal small subunit (SSU) processome composed of at least 40 protein subunits and snoRNA U3.

The protein resides in the cytoplasm. Its function is as follows. Component of the ribosome, a large ribonucleoprotein complex responsible for the synthesis of proteins in the cell. The small ribosomal subunit (SSU) binds messenger RNAs (mRNAs) and translates the encoded message by selecting cognate aminoacyl-transfer RNA (tRNA) molecules. The large subunit (LSU) contains the ribosomal catalytic site termed the peptidyl transferase center (PTC), which catalyzes the formation of peptide bonds, thereby polymerizing the amino acids delivered by tRNAs into a polypeptide chain. The nascent polypeptides leave the ribosome through a tunnel in the LSU and interact with protein factors that function in enzymatic processing, targeting, and the membrane insertion of nascent chains at the exit of the ribosomal tunnel. Plays a role in the assembly and function of the 40S ribosomal subunit. Mutations in this protein affects the control of translational fidelity. Involved in nucleolar processing of pre-18S ribosomal RNA and ribosome assembly. Component of the ribosome, a large ribonucleoprotein complex responsible for the synthesis of proteins in the cell. The small ribosomal subunit (SSU) binds messenger RNAs (mRNAs) and translates the encoded message by selecting cognate aminoacyl-transfer RNA (tRNA) molecules. The large subunit (LSU) contains the ribosomal catalytic site termed the peptidyl transferase center (PTC), which catalyzes the formation of peptide bonds, thereby polymerizing the amino acids delivered by tRNAs into a polypeptide chain. The nascent polypeptides leave the ribosome through a tunnel in the LSU and interact with protein factors that function in enzymatic processing, targeting, and the membrane insertion of nascent chains at the exit of the ribosomal tunnel. uS5 is important for the assembly and function of the 40S ribosomal subunit. Mutations in this protein affects the control of translational fidelity. Involved in nucleolar processing of pre-18S ribosomal RNA and ribosome assembly. The sequence is that of Small ribosomal subunit protein uS5 (rps2) from Schizosaccharomyces pombe (strain 972 / ATCC 24843) (Fission yeast).